The chain runs to 331 residues: Carbonic anhydrase-related protein 11 (331 aa).

The N-terminal stretch at 1 to 23 is a signal peptide; the sequence is MGGAARLSAPRALVLWAVLGAAA. Positions 33 to 306 constitute an Alpha-carbonic anhydrase domain; it reads DWWSYKDNLQ…LAHRALRGNR (274 aa). N-linked (GlcNAc...) asparagine glycans are attached at residues Asn-118, Asn-170, Asn-189, and Asn-263. The interval 303–331 is disordered; the sequence is RGNRDPRHPERRCRGPNYRLHVDGAPHGR. Residues 322 to 331 show a composition bias toward basic and acidic residues; it reads LHVDGAPHGR.

This sequence belongs to the alpha-carbonic anhydrase family.

The protein resides in the secreted. Functionally, does not have a catalytic activity. This is Carbonic anhydrase-related protein 11 (CA11) from Sus scrofa (Pig).